Reading from the N-terminus, the 89-residue chain is Small ribosomal subunit protein uS15 (89 aa).

It belongs to the universal ribosomal protein uS15 family. In terms of assembly, part of the 30S ribosomal subunit. Forms a bridge to the 50S subunit in the 70S ribosome, contacting the 23S rRNA.

One of the primary rRNA binding proteins, it binds directly to 16S rRNA where it helps nucleate assembly of the platform of the 30S subunit by binding and bridging several RNA helices of the 16S rRNA. Functionally, forms an intersubunit bridge (bridge B4) with the 23S rRNA of the 50S subunit in the ribosome. The sequence is that of Small ribosomal subunit protein uS15 from Phocaeicola vulgatus (strain ATCC 8482 / DSM 1447 / JCM 5826 / CCUG 4940 / NBRC 14291 / NCTC 11154) (Bacteroides vulgatus).